The chain runs to 760 residues: Protein HEADING DATE 3B (760 aa).

2 stretches are compositionally biased toward gly residues: residues 1-12 (MATRGGGGGGGG) and 60-70 (SGGGGGGGVGG). Disordered regions lie at residues 1–120 (MATR…KINK), 144–169 (SRST…RLAD), 236–262 (VKSR…EKSS), and 285–346 (TGII…IEET). Positions 71–87 (SPAHSTSAASQSQSQSQ) are enriched in low complexity. Positions 94–107 (SLFQPFNVPSNRPG) are enriched in polar residues. The span at 108-120 (HSTEKINSDKINK) shows a compositional bias: basic and acidic residues. The segment covering 236 to 248 (VKSRTPLKDKEME) has biased composition (basic and acidic residues). The Nuclear localization signal signature appears at 349 to 355 (KRKRLLE). Disordered regions lie at residues 485–543 (LQQP…GVQL) and 707–760 (FPTV…QRDD). Polar residues-rich tracts occupy residues 511–522 (QRDQAATNGVSK), 531–543 (ASDN…GVQL), and 707–730 (FPTV…QTNV).

In terms of tissue distribution, expressed in mesophyll cells of young leaves, anthers, stigmas and the top of lemmas.

It is found in the nucleus. Functionally, involved in the regulation of flowering time under short day (SD) and long day (LD) conditions. Functions as a floral promoter by negatively regulating GHD7, a repressor of the photoperiodic control of flowering. Acts as a floral activator in the LD photoperiodic pathway. Involved in blue light-induced activation of EHD1 expression to promote flowering under SD conditions. The protein is Protein HEADING DATE 3B (HD3B) of Oryza sativa subsp. japonica (Rice).